The primary structure comprises 701 residues: Elongation factor G (701 aa).

The tr-type G domain maps to 11–287 (TKVRNIGIMA…AVIDYLPSPL (277 aa)). GTP is bound by residues 20–27 (AHIDAGKT), 84–88 (DTPGH), and 138–141 (NKMD).

The protein belongs to the TRAFAC class translation factor GTPase superfamily. Classic translation factor GTPase family. EF-G/EF-2 subfamily.

Its subcellular location is the cytoplasm. Catalyzes the GTP-dependent ribosomal translocation step during translation elongation. During this step, the ribosome changes from the pre-translocational (PRE) to the post-translocational (POST) state as the newly formed A-site-bound peptidyl-tRNA and P-site-bound deacylated tRNA move to the P and E sites, respectively. Catalyzes the coordinated movement of the two tRNA molecules, the mRNA and conformational changes in the ribosome. In Mycobacterium leprae (strain Br4923), this protein is Elongation factor G.